Consider the following 364-residue polypeptide: tRNA N6-adenosine threonylcarbamoyltransferase (364 aa).

Fe cation is bound by residues histidine 118 and histidine 122. Substrate is bound by residues 140–144, aspartate 173, glycine 186, and asparagine 288; that span reads LVSGG. Aspartate 316 is a binding site for Fe cation.

Belongs to the KAE1 / TsaD family. It depends on Fe(2+) as a cofactor.

The protein resides in the cytoplasm. The enzyme catalyses L-threonylcarbamoyladenylate + adenosine(37) in tRNA = N(6)-L-threonylcarbamoyladenosine(37) in tRNA + AMP + H(+). Its function is as follows. Required for the formation of a threonylcarbamoyl group on adenosine at position 37 (t(6)A37) in tRNAs that read codons beginning with adenine. Is involved in the transfer of the threonylcarbamoyl moiety of threonylcarbamoyl-AMP (TC-AMP) to the N6 group of A37, together with TsaE and TsaB. TsaD likely plays a direct catalytic role in this reaction. This Cereibacter sphaeroides (strain ATCC 17023 / DSM 158 / JCM 6121 / CCUG 31486 / LMG 2827 / NBRC 12203 / NCIMB 8253 / ATH 2.4.1.) (Rhodobacter sphaeroides) protein is tRNA N6-adenosine threonylcarbamoyltransferase.